Reading from the N-terminus, the 429-residue chain is Ribosomal RNA small subunit methyltransferase B (429 aa).

S-adenosyl-L-methionine contacts are provided by residues 254–260 (CAAPGGK), Asp-277, Asp-303, and Asp-322. Catalysis depends on Cys-375, which acts as the Nucleophile.

Belongs to the class I-like SAM-binding methyltransferase superfamily. RsmB/NOP family.

Its subcellular location is the cytoplasm. The catalysed reaction is cytidine(967) in 16S rRNA + S-adenosyl-L-methionine = 5-methylcytidine(967) in 16S rRNA + S-adenosyl-L-homocysteine + H(+). Specifically methylates the cytosine at position 967 (m5C967) of 16S rRNA. In Escherichia coli (strain SE11), this protein is Ribosomal RNA small subunit methyltransferase B.